Reading from the N-terminus, the 461-residue chain is Chromosomal replication initiator protein DnaA (461 aa).

The segment at 1 to 83 (MTASLWQQCL…LHFAVGRRPT (83 aa)) is domain I, interacts with DnaA modulators. The segment at 83–124 (TAATVQMNTAAAPVADVRIGPAITVPSWTSKQDAMPEINHKS) is domain II. The domain III, AAA+ region stretch occupies residues 125–341 (NINETYTFEN…GALNRVIANA (217 aa)). Positions 169, 171, 172, and 173 each coordinate ATP. The domain IV, binds dsDNA stretch occupies residues 342–461 (RFTGKPINID…YSNLIRTLSS (120 aa)).

Belongs to the DnaA family. Oligomerizes as a right-handed, spiral filament on DNA at oriC.

Its subcellular location is the cytoplasm. Plays an essential role in the initiation and regulation of chromosomal replication. ATP-DnaA binds to the origin of replication (oriC) to initiate formation of the DNA replication initiation complex once per cell cycle. Binds the DnaA box (a 9 base pair repeat at the origin) and separates the double-stranded (ds)DNA. Forms a right-handed helical filament on oriC DNA; dsDNA binds to the exterior of the filament while single-stranded (ss)DNA is stabiized in the filament's interior. The ATP-DnaA-oriC complex binds and stabilizes one strand of the AT-rich DNA unwinding element (DUE), permitting loading of DNA polymerase. After initiation quickly degrades to an ADP-DnaA complex that is not apt for DNA replication. Binds acidic phospholipids. The chain is Chromosomal replication initiator protein DnaA from Tolumonas auensis (strain DSM 9187 / NBRC 110442 / TA 4).